Here is a 1291-residue protein sequence, read N- to C-terminus: Vigilin 1 (1291 aa).

The span at 1-39 (MEHLSNLEQPTTMDSYDFQKLTNDENLQGTESQVPSGSK) shows a compositional bias: polar residues. Disordered stretches follow at residues 1 to 45 (MEHL…STNG) and 70 to 91 (HENAQQGKKQNNSKSFSKKPAI). Low complexity predominate over residues 73–88 (AQQGKKQNNSKSFSKK). Phosphoserine is present on serine 115. Positions 124–148 (TSVAGSDSVSRDKIPFSASSRASST) are disordered. KH domains lie at 166–229 (ILSP…RRQI), 236–328 (RETK…QKDI), 339–405 (TTVR…ALYL), 416–486 (TIPT…NSTI), 575–644 (SKFY…LADL), 658–726 (IVSE…VSEI), 741–798 (SHVE…AARI), 808–883 (DTIL…KQEL), 894–957 (AYTS…IKEI), 967–1040 (LVEK…ETRL), 1050–1114 (QVEE…KEMI), and 1219–1280 (NCIA…KDLI). Residues 266 to 303 (TSTRIQIPKRNNTANESSDDAKKPEKEENSAASTLDDL) are disordered. Residues 268 to 281 (TRIQIPKRNNTANE) are compositionally biased toward polar residues. The segment covering 284–294 (DDAKKPEKEEN) has biased composition (basic and acidic residues). A disordered region spans residues 845–865 (PREDDSSNSTGNELMKPTSPD). Serine 934 is subject to Phosphoserine. Phosphothreonine is present on threonine 935.

It localises to the endoplasmic reticulum. The protein localises to the cytoplasm. In terms of biological role, required for cell survival under thermal stress. This is Vigilin 1 (vgl1) from Schizosaccharomyces pombe (strain 972 / ATCC 24843) (Fission yeast).